A 581-amino-acid chain; its full sequence is Dehydrocurvularin exporter (581 aa).

Over residues 1–10 the composition is skewed to polar residues; the sequence is MTDSPSLESN. Positions 1–47 are disordered; the sequence is MTDSPSLESNNKSDMDTPRPPASSHDEHDAAESVSEKQDSATTSPTG. N-linked (GlcNAc...) asparagine glycosylation is present at Asn11. Positions 24–39 are enriched in basic and acidic residues; the sequence is SHDEHDAAESVSEKQD. Transmembrane regions (helical) follow at residues 61-81, 96-116, 126-146, 159-179, 184-204, 215-235, 251-271, 288-308, 330-350, 363-383, 392-412, 424-444, 456-476, and 527-547; these read LVMFTIFVSTILVSLEIGIIA, DVGWYGSATFILAAAASPLWG, WVYLSAVGIFLVGSIVAAAAP, GWGASGVLGGTLIVINYVAPP, LLIGTWMAVFMMSTILGPVIG, WCFWINLPVGGPIVVLLLLFL, IILNLDIPGFCLLLVSLVCLT, VIATLVLWILLTIGFFIVEWL, IFCLVSYAALYQVMFYLPIYF, VNTLPFLAFFALGAMVSGGAI, YELAGALIMTAGMALIYILDV, VLFGFGIGLCNQVPMTAVQGF, IMVMCQTLSGAYFVAIAQSLF, and VFAFSLACAAFSVILTALIPF. The segment at 552–581 is disordered; it reads DHEKKPSKDAMASDEVKASEEVQQEKKVTV. A compositionally biased stretch (basic and acidic residues) spans 565–581; it reads DEVKASEEVQQEKKVTV.

It belongs to the major facilitator superfamily. TCR/Tet family.

Its subcellular location is the cell membrane. Efflux pump that is probably involved in the export of dehydrocurvularin. This is Dehydrocurvularin exporter from Alternaria cinerariae.